The sequence spans 139 residues: MKKSALLNSELSYLVATLGHTDEITICDAGLPIPDGVSRIDLALTHGVPSFIETVRVMLSESQIEGAIVATEFAEVSPELYQALVAELQCEEEKTGKVLSLTHVSHEEFKQRTESSKAVVRTGECTPYANVIFQAGVVF.

H20 serves as the catalytic Proton donor. Substrate-binding positions include D28, H106, and 128–130 (YAN).

Belongs to the RbsD / FucU family. RbsD subfamily. In terms of assembly, homodecamer.

The protein resides in the cytoplasm. The catalysed reaction is beta-D-ribopyranose = beta-D-ribofuranose. Its pathway is carbohydrate metabolism; D-ribose degradation; D-ribose 5-phosphate from beta-D-ribopyranose: step 1/2. Catalyzes the interconversion of beta-pyran and beta-furan forms of D-ribose. In Vibrio vulnificus (strain CMCP6), this protein is D-ribose pyranase.